Reading from the N-terminus, the 165-residue chain is Deoxyuridine 5'-triphosphate nucleotidohydrolase (165 aa).

This sequence belongs to the dUTPase family. In terms of assembly, homotrimer. Requires Mg(2+) as cofactor.

Its subcellular location is the host cytoplasm. It localises to the virion. The enzyme catalyses dUTP + H2O = dUMP + diphosphate + H(+). Its function is as follows. The viral dUTPase may play a role in lowering the dUTP concentration in natural infections to minimize misincorporation of deoxyuridine into the viral DNA and ensure the fidelity of genome replication. The chain is Deoxyuridine 5'-triphosphate nucleotidohydrolase from African swine fever virus (isolate Tick/South Africa/Pretoriuskop Pr4/1996) (ASFV).